The primary structure comprises 136 residues: NADH-ubiquinone oxidoreductase chain 2 (136 aa).

4 helical membrane passes run 12-32 (YFLI…NQSF), 34-54 (FLIP…MWLV), 74-94 (IGPL…WLMV), and 99-119 (FLLM…AVIL).

It belongs to the complex I subunit 2 family.

Its subcellular location is the mitochondrion inner membrane. The enzyme catalyses a ubiquinone + NADH + 5 H(+)(in) = a ubiquinol + NAD(+) + 4 H(+)(out). In terms of biological role, core subunit of the mitochondrial membrane respiratory chain NADH dehydrogenase (Complex I) that is believed to belong to the minimal assembly required for catalysis. Complex I functions in the transfer of electrons from NADH to the respiratory chain. The immediate electron acceptor for the enzyme is believed to be ubiquinone. The sequence is that of NADH-ubiquinone oxidoreductase chain 2 (ND2) from Artemia salina (Brine shrimp).